The primary structure comprises 483 residues: 23S rRNA (uracil(1939)-C(5))-methyltransferase RlmD (483 aa).

The span at 1 to 11 (MTGLGKRRPAR) shows a compositional bias: basic residues. The tract at residues 1-36 (MTGLGKRRPARSRSGVSGLRERRQPASVERSAGSEG) is disordered. In terms of domain architecture, TRAM spans 29–90 (ERSAGSEGRR…KRFDEAHVSE (62 aa)). The [4Fe-4S] cluster site is built by Cys103, Cys109, Cys112, and Cys189. S-adenosyl-L-methionine is bound by residues Gln298, Phe332, Asn337, Glu353, Asp379, and Asp401. Cys427 functions as the Nucleophile in the catalytic mechanism.

It belongs to the class I-like SAM-binding methyltransferase superfamily. RNA M5U methyltransferase family. RlmD subfamily.

It catalyses the reaction uridine(1939) in 23S rRNA + S-adenosyl-L-methionine = 5-methyluridine(1939) in 23S rRNA + S-adenosyl-L-homocysteine + H(+). Its function is as follows. Catalyzes the formation of 5-methyl-uridine at position 1939 (m5U1939) in 23S rRNA. This Halomonas elongata (strain ATCC 33173 / DSM 2581 / NBRC 15536 / NCIMB 2198 / 1H9) protein is 23S rRNA (uracil(1939)-C(5))-methyltransferase RlmD.